Consider the following 587-residue polypeptide: Putative ankyrin repeat protein L66 (587 aa).

ANK repeat units lie at residues 77-106 (DKNL…DIRI), 108-136 (NNYP…DVSD), 137-166 (YDNY…DVHC), 168-196 (DNAP…DVNY), 199-228 (NEDL…NIHF), 230-256 (DSLI…ILGN), 259-288 (NIRN…SIEN), 302-331 (FKKN…NVAF), 333-360 (DNLP…NVKI), 361-390 (NYEN…NVKD), 392-418 (TAIY…DLIK), 420-448 (HNEI…INKS), 449-478 (IYDK…DIKS), 480-507 (KFHD…KINN), 509-537 (YKNL…NMKC), and 539-567 (RIDT…KLIC).

This Acanthamoeba polyphaga mimivirus (APMV) protein is Putative ankyrin repeat protein L66.